The primary structure comprises 401 residues: L-rhamnonate dehydratase (401 aa).

The substrate site is built by His-29 and Arg-55. Mg(2+) contacts are provided by Asp-222, Glu-248, and Glu-276. The active-site Proton acceptor is the His-325. Substrate is bound at residue Glu-345.

It belongs to the mandelate racemase/muconate lactonizing enzyme family. RhamD subfamily. In terms of assembly, homooctamer; tetramer of dimers. The cofactor is Mg(2+).

The enzyme catalyses L-rhamnonate = 2-dehydro-3-deoxy-L-rhamnonate + H2O. Its function is as follows. Catalyzes the dehydration of L-rhamnonate to 2-keto-3-deoxy-L-rhamnonate (KDR). The chain is L-rhamnonate dehydratase from Salmonella heidelberg (strain SL476).